The sequence spans 307 residues: Serine/threonine-protein phosphatase 4 catalytic subunit B (307 aa).

Positions 54, 56, 82, and 114 each coordinate Mn(2+). Histidine 115 acts as the Proton donor in catalysis. Mn(2+) contacts are provided by histidine 164 and histidine 238. Position 307 is a leucine methyl ester (leucine 307).

Belongs to the PPP phosphatase family. PP-4 (PP-X) subfamily. In terms of assembly, serine/threonine-protein phosphatase 4 (PP4) occurs in different assemblies of the catalytic and one or more regulatory subunits. Mn(2+) serves as cofactor.

The protein localises to the cytoplasm. The protein resides in the cytoskeleton. It is found in the microtubule organizing center. Its subcellular location is the centrosome. It carries out the reaction O-phospho-L-seryl-[protein] + H2O = L-seryl-[protein] + phosphate. The enzyme catalyses O-phospho-L-threonyl-[protein] + H2O = L-threonyl-[protein] + phosphate. Protein phosphatase that regulates many processes such as microtubule organization at centrosomes. This is Serine/threonine-protein phosphatase 4 catalytic subunit B (ppp4cb) from Danio rerio (Zebrafish).